An 84-amino-acid chain; its full sequence is Chymotrypsin inhibitor Ani s 6 (84 aa).

A signal peptide spans 1–22 (MFQSTFFLVLMVCVATARFANK). Cystine bridges form between Cys25-Cys58, Cys34-Cys54, Cys38-Cys50, Cys42-Cys79, and Cys60-Cys73. A TIL domain is found at 25–79 (CPPNEEYNECGNPCQEKCDNGEPVICTYQCEHRCFCKQGYVRLTEDGECVPEEFC).

This sequence belongs to the serine protease inhibitor-like (TIL domain-containing) family.

The protein resides in the secreted. Functionally, inhibits alpha-chymotrypsin, but not trypsin. This chain is Chymotrypsin inhibitor Ani s 6, found in Anisakis simplex (Herring worm).